The primary structure comprises 518 residues: uncharacterized protein (518 aa).

It is found in the virion. This is an uncharacterized protein from Acanthamoeba polyphaga (Amoeba).